The primary structure comprises 478 residues: Dynein regulatory complex subunit 4 (478 aa).

Residues 1–12 are compositionally biased toward basic residues; that stretch reads MAPKKKGKKGKA. The disordered stretch occupies residues 1-33; the sequence is MAPKKKGKKGKAKGTPIVDGLAPEDMSKEQVEE. Positions 1 to 114 are regulates microtubule-binding; sequence MAPKKKGKKG…LLYEHQNNLT (114 aa). The tract at residues 115 to 258 is microtubule-binding; the sequence is EMKAEGTVVM…NSLKEQMEDM (144 aa). The stretch at 242–427 forms a coiled coil; the sequence is LNNLALINSL…KDLQYELAQV (186 aa). The interaction with SMO stretch occupies residues 357-478; it reads QQKTGFKNLV…GPAGLVGTPT (122 aa).

The protein belongs to the DRC4 family. As to quaternary structure, component of the nexin-dynein regulatory complex (N-DRC). Interacts with microtubules. Interacts with SMO. Interacts (via coiled-coil domains) with RAB3B (in GTP-bound form). Interacts with DRC1. Interacts with DRC7. In terms of tissue distribution, expressed in respiratory epithelial cells (at protein level). Expressed in the heart, skeletal muscle, pancreas, liver, brain, trachea and lung. Weakly or not expressed in placenta and kidney.

It localises to the cytoplasm. It is found in the cytoskeleton. The protein localises to the cell projection. Its subcellular location is the cilium. The protein resides in the flagellum. It localises to the cilium axoneme. It is found in the cilium basal body. The protein localises to the golgi apparatus. Its subcellular location is the flagellum axoneme. Functionally, component of the nexin-dynein regulatory complex (N-DRC), a key regulator of ciliary/flagellar motility which maintains the alignment and integrity of the distal axoneme and regulates microtubule sliding in motile axonemes. Plays an important role in the assembly of the N-DRC linker. Plays dual roles at both the primary (or non-motile) cilia to regulate hedgehog signaling and in motile cilia to coordinate cilia movement. Required for proper motile cilia functioning. Positively regulates ciliary smoothened (SMO)-dependent Hedgehog (Hh) signaling pathway by facilitating the trafficking of SMO into the cilium and the stimulation of SMO activity in a GRK2-dependent manner. This chain is Dynein regulatory complex subunit 4 (GAS8), found in Homo sapiens (Human).